The primary structure comprises 337 residues: Biotin synthase (337 aa).

Positions alanine 52–arginine 281 constitute a Radical SAM core domain. Cysteine 67, cysteine 71, and cysteine 74 together coordinate [4Fe-4S] cluster. 4 residues coordinate [2Fe-2S] cluster: cysteine 112, cysteine 144, cysteine 204, and arginine 276.

Belongs to the radical SAM superfamily. Biotin synthase family. As to quaternary structure, homodimer. [4Fe-4S] cluster is required as a cofactor. [2Fe-2S] cluster serves as cofactor.

It catalyses the reaction (4R,5S)-dethiobiotin + (sulfur carrier)-SH + 2 reduced [2Fe-2S]-[ferredoxin] + 2 S-adenosyl-L-methionine = (sulfur carrier)-H + biotin + 2 5'-deoxyadenosine + 2 L-methionine + 2 oxidized [2Fe-2S]-[ferredoxin]. It functions in the pathway cofactor biosynthesis; biotin biosynthesis; biotin from 7,8-diaminononanoate: step 2/2. In terms of biological role, catalyzes the conversion of dethiobiotin (DTB) to biotin by the insertion of a sulfur atom into dethiobiotin via a radical-based mechanism. The sequence is that of Biotin synthase from Methylobacterium radiotolerans (strain ATCC 27329 / DSM 1819 / JCM 2831 / NBRC 15690 / NCIMB 10815 / 0-1).